A 159-amino-acid polypeptide reads, in one-letter code: MNIRRKNRLWIACAVLAGLALTITLVLYALRSNIDLFYTPGEILYGKRETHQLPEVGQRLRVGGMVMPGSVKRDPDSLKVNFSIYDAEGVVDVTYEGILPDLFREGQGVVVQGELGEKNHVQAKEVLAKHDENYTPPEVEKAMQENHRRPESVYKDKAS.

The Cytoplasmic segment spans residues 1–8 (MNIRRKNR). The helical; Signal-anchor for type II membrane protein transmembrane segment at 9-29 (LWIACAVLAGLALTITLVLYA) threads the bilayer. The Periplasmic portion of the chain corresponds to 30-159 (LRSNIDLFYT…PESVYKDKAS (130 aa)). The heme site is built by His-130 and Tyr-134. The interval 130-159 (HDENYTPPEVEKAMQENHRRPESVYKDKAS) is disordered.

The protein belongs to the CcmE/CycJ family.

Its subcellular location is the cell inner membrane. Heme chaperone required for the biogenesis of c-type cytochromes. Transiently binds heme delivered by CcmC and transfers the heme to apo-cytochromes in a process facilitated by CcmF and CcmH. In Citrobacter koseri (strain ATCC BAA-895 / CDC 4225-83 / SGSC4696), this protein is Cytochrome c-type biogenesis protein CcmE.